The primary structure comprises 453 residues: Ubiquitin-associated protein 1 (453 aa).

In terms of domain architecture, UMA spans 19–65 (LDDVPFKLNEKFRCPSKVGLPIGFCLSDCNAILSDLQYDFNLERRTV). The span at 83 to 93 (EAIRTDSESER) shows a compositional bias: basic and acidic residues. Disordered stretches follow at residues 83–119 (EAIR…QDIV), 189–223 (LQSQ…AKTG), and 260–335 (FPKL…AGTT). Over residues 189–199 (LQSQPQSSVSP) the composition is skewed to low complexity. Over residues 285–328 (NLSNGTPPSLQRTASNNNTTLPQEQPVFAQNGTPKQSNPVTVTS) the composition is skewed to polar residues. 2 consecutive UBA domains span residues 340 to 381 (SPSE…LFTH) and 403 to 449 (GSEE…LMTR).

Component of an ESCRT-I complex (endosomal sorting complex required for transport I).

It localises to the cytoplasm. The protein localises to the cytosol. It is found in the endosome. Component of the ESCRT-I complex, a regulator of vesicular trafficking process. Binds to ubiquitinated cargo proteins and is required for the sorting of endocytic ubiquitinated cargos into multivesicular bodies (MVBs). This chain is Ubiquitin-associated protein 1, found in Danio rerio (Zebrafish).